We begin with the raw amino-acid sequence, 41 residues long: Alpha-conotoxin TxIB (41 aa).

A propeptide spanning residues 1–20 (FDGRNTSANNKATDLMALPV) is cleaved from the precursor. Intrachain disulfides connect C23–C29 and C24–C37. The tract at residues 25 to 27 (SDP) is ser-Xaa-Pro motif, crucial for potent interaction with nAChR. C37 is modified (cysteine amide; in Alpha-conotoxin TxIB). The propeptide occupies 39 to 41 (GRR).

This sequence belongs to the conotoxin A superfamily. In terms of tissue distribution, expressed by the venom duct.

It localises to the secreted. Alpha-conotoxins act on postsynaptic membranes, they bind to the nicotinic acetylcholine receptors (nAChR) and thus inhibit them. This conotoxin is a subtype-specific blocker of alpha-6/alpha-3-beta-2-beta-3 (CHRNA6/CHRNA3-CHRNB2-CHRNB3) nAChRs nicotinic acetylcholine receptors (nAChRs) (IC(50)=28.4 nM). The sequence is that of Alpha-conotoxin TxIB from Conus textile (Cloth-of-gold cone).